A 668-amino-acid chain; its full sequence is DNA ligase (668 aa).

NAD(+) contacts are provided by residues 31–35 (DAEYD), 80–81 (SL), and E112. The active-site N6-AMP-lysine intermediate is the K114. 4 residues coordinate NAD(+): R135, E172, K289, and K313. Positions 407, 410, 425, and 431 each coordinate Zn(2+). The region spanning 591 to 668 (SVPQPLAGKV…NEEQLIELLN (78 aa)) is the BRCT domain.

It belongs to the NAD-dependent DNA ligase family. LigA subfamily. Requires Mg(2+) as cofactor. The cofactor is Mn(2+).

The enzyme catalyses NAD(+) + (deoxyribonucleotide)n-3'-hydroxyl + 5'-phospho-(deoxyribonucleotide)m = (deoxyribonucleotide)n+m + AMP + beta-nicotinamide D-nucleotide.. Functionally, DNA ligase that catalyzes the formation of phosphodiester linkages between 5'-phosphoryl and 3'-hydroxyl groups in double-stranded DNA using NAD as a coenzyme and as the energy source for the reaction. It is essential for DNA replication and repair of damaged DNA. The polypeptide is DNA ligase (Aliivibrio fischeri (strain MJ11) (Vibrio fischeri)).